Consider the following 313-residue polypeptide: Aspartoacylase (313 aa).

Positions 21 and 24 each coordinate Zn(2+). Residues arginine 63, asparagine 70, and arginine 71 each contribute to the N-acetyl-L-aspartate site. Zn(2+) is bound at residue histidine 116. 2 residues coordinate N-acetyl-L-aspartate: tyrosine 164 and arginine 168. Glutamate 178 functions as the Proton donor/acceptor in the catalytic mechanism. Residue tyrosine 288 coordinates N-acetyl-L-aspartate.

The protein belongs to the AspA/AstE family. Aspartoacylase subfamily. As to quaternary structure, homodimer. Requires Zn(2+) as cofactor.

The protein localises to the cytoplasm. The protein resides in the nucleus. It catalyses the reaction an N-acyl-L-aspartate + H2O = a carboxylate + L-aspartate. The enzyme catalyses N-acetyl-L-aspartate + H2O = L-aspartate + acetate. Its function is as follows. Catalyzes the deacetylation of N-acetylaspartic acid (NAA) to produce acetate and L-aspartate. NAA occurs in high concentration in brain and its hydrolysis NAA plays a significant part in the maintenance of intact white matter. In other tissues it acts as a scavenger of NAA from body fluids. This Pongo abelii (Sumatran orangutan) protein is Aspartoacylase.